Consider the following 235-residue polypeptide: Glycerol-3-phosphate acyltransferase (235 aa).

The next 6 membrane-spanning stretches (helical) occupy residues leucine 4 to glycine 24, serine 56 to phenylalanine 76, leucine 94 to glycine 114, leucine 125 to tryptophan 145, valine 152 to phenylalanine 172, and phenylalanine 191 to leucine 211.

This sequence belongs to the PlsY family. Probably interacts with PlsX.

Its subcellular location is the cell inner membrane. The catalysed reaction is an acyl phosphate + sn-glycerol 3-phosphate = a 1-acyl-sn-glycero-3-phosphate + phosphate. Its pathway is lipid metabolism; phospholipid metabolism. Catalyzes the transfer of an acyl group from acyl-phosphate (acyl-PO(4)) to glycerol-3-phosphate (G3P) to form lysophosphatidic acid (LPA). This enzyme utilizes acyl-phosphate as fatty acyl donor, but not acyl-CoA or acyl-ACP. This is Glycerol-3-phosphate acyltransferase from Chlorobium luteolum (strain DSM 273 / BCRC 81028 / 2530) (Pelodictyon luteolum).